The primary structure comprises 350 residues: Beta-hexosaminidase (350 aa).

Residues D62, R70, R133, and 163-164 (KH) contribute to the substrate site. H176 serves as the catalytic Proton donor/acceptor. D248 functions as the Nucleophile in the catalytic mechanism.

This sequence belongs to the glycosyl hydrolase 3 family. NagZ subfamily.

Its subcellular location is the cytoplasm. The enzyme catalyses Hydrolysis of terminal non-reducing N-acetyl-D-hexosamine residues in N-acetyl-beta-D-hexosaminides.. It participates in cell wall biogenesis; peptidoglycan recycling. In terms of biological role, plays a role in peptidoglycan recycling by cleaving the terminal beta-1,4-linked N-acetylglucosamine (GlcNAc) from peptide-linked peptidoglycan fragments, giving rise to free GlcNAc, anhydro-N-acetylmuramic acid and anhydro-N-acetylmuramic acid-linked peptides. The polypeptide is Beta-hexosaminidase (Haemophilus influenzae (strain PittEE)).